The sequence spans 726 residues: Catalase-peroxidase (726 aa).

Residues 1-33 (MSTTDDTHNTLSTGKCPFHQGGHDRSAGAGTAS) form a disordered region. A cross-link (tryptophyl-tyrosyl-methioninium (Trp-Tyr) (with M-252)) is located at residues 105–226 (WHGAGTYRSI…LGATEMGLIY (122 aa)). The active-site Proton acceptor is the His-106. Positions 226 to 252 (YVNPEGPDHSGEPLSAAAAIRATFGNM) form a cross-link, tryptophyl-tyrosyl-methioninium (Tyr-Met) (with W-105). Residue His-267 coordinates heme b.

This sequence belongs to the peroxidase family. Peroxidase/catalase subfamily. Homodimer or homotetramer. Requires heme b as cofactor. Post-translationally, formation of the three residue Trp-Tyr-Met cross-link is important for the catalase, but not the peroxidase activity of the enzyme.

It carries out the reaction H2O2 + AH2 = A + 2 H2O. It catalyses the reaction 2 H2O2 = O2 + 2 H2O. In terms of biological role, bifunctional enzyme with both catalase and broad-spectrum peroxidase activity. The polypeptide is Catalase-peroxidase (Salmonella heidelberg (strain SL476)).